The primary structure comprises 368 residues: Histidinol-phosphate aminotransferase (368 aa).

At Lys-226 the chain carries N6-(pyridoxal phosphate)lysine.

The protein belongs to the class-II pyridoxal-phosphate-dependent aminotransferase family. Histidinol-phosphate aminotransferase subfamily. Homodimer. Pyridoxal 5'-phosphate serves as cofactor.

It catalyses the reaction L-histidinol phosphate + 2-oxoglutarate = 3-(imidazol-4-yl)-2-oxopropyl phosphate + L-glutamate. Its pathway is amino-acid biosynthesis; L-histidine biosynthesis; L-histidine from 5-phospho-alpha-D-ribose 1-diphosphate: step 7/9. The sequence is that of Histidinol-phosphate aminotransferase from Colwellia psychrerythraea (strain 34H / ATCC BAA-681) (Vibrio psychroerythus).